The following is a 68-amino-acid chain: Lantibiotic mersacidin (68 aa).

Residues M1–F28 form a disordered region. Positions M1–A48 are excised as a propeptide. Residues C49 to T50 constitute a cross-link (beta-methyllanthionine (Cys-Thr)). 2 consecutive cross-links (beta-methyllanthionine (Thr-Cys)) follow at residues T52–C60 and T61–C66. The segment at residues T63–C68 is a cross-link (S-(2-aminovinyl)-3-methyl-D-cysteine (Thr-Cys)). A 2,3-didehydroalanine (Ser) modification is found at S64.

This sequence belongs to the type B lantibiotic family. In terms of processing, maturation of lantibiotics involves the enzymatic conversion of Thr, and Ser into dehydrated AA and the formation of thioether bonds with cysteine. The carboxy-terminal beta-methyllanthionine undergoes decarboxylation. This is followed by membrane translocation and cleavage of the modified precursor.

Functionally, kills a number of Gram-positive bacteria. Acts at the level of cell wall biosynthesis by interfering with bacterial peptidoglycan biosynthesis. Specifically inhibits the conversion of the lipid II intermediate into polymeric nascent glycan strands by transglycosylation. May interact with the peptidoglycan precursor rather than with the enzyme. In Bacillus sp. (strain HIL-Y85/54728), this protein is Lantibiotic mersacidin (mrsA).